The following is a 355-amino-acid chain: Butyrate kinase 1 (355 aa).

Belongs to the acetokinase family.

The protein resides in the cytoplasm. The catalysed reaction is butanoate + ATP = butanoyl phosphate + ADP. It functions in the pathway lipid metabolism; butanoate metabolism. Its function is as follows. Catalyzes the conversion of butyryl-CoA through butyryl phosphate to butyrate. In Clostridium acetobutylicum (strain ATCC 824 / DSM 792 / JCM 1419 / IAM 19013 / LMG 5710 / NBRC 13948 / NRRL B-527 / VKM B-1787 / 2291 / W), this protein is Butyrate kinase 1 (buk1).